Reading from the N-terminus, the 154-residue chain is Large ribosomal subunit protein uL23 (154 aa).

Belongs to the universal ribosomal protein uL23 family.

This protein binds to a specific region on the 26S rRNA. This is Large ribosomal subunit protein uL23 (RPL23A) from Daucus carota (Wild carrot).